The sequence spans 232 residues: Ubiquitin carboxyl-terminal hydrolase UCHL3 (232 aa).

Residues 6–225 form the UCH catalytic domain; it reads IWTPLESNPD…LRFSALAVIP (220 aa). The tract at residues 10–14 is interaction with ubiquitin; it reads LESNP. Cysteine 92 acts as the Nucleophile in catalysis. Residues 151–159 are crossover loop which restricts access of large ubiquitin adducts to the active site; that stretch reads QVENRDDIL. Residues 163-165 form an interaction with ubiquitin region; the sequence is THF. The Proton donor role is filled by histidine 164.

Belongs to the peptidase C12 family.

It catalyses the reaction Thiol-dependent hydrolysis of ester, thioester, amide, peptide and isopeptide bonds formed by the C-terminal Gly of ubiquitin (a 76-residue protein attached to proteins as an intracellular targeting signal).. Thiol protease that recognizes and hydrolyzes a peptide bond at the C-terminal glycine of either ubiquitin or NEDD8. Essential for parasite blood stage survival. This Plasmodium falciparum (isolate 3D7) protein is Ubiquitin carboxyl-terminal hydrolase UCHL3.